Reading from the N-terminus, the 459-residue chain is Bifunctional protein GlmU (459 aa).

The pyrophosphorylase stretch occupies residues 1 to 229; it reads MSNYAIILAA…FDESLGVNDR (229 aa). UDP-N-acetyl-alpha-D-glucosamine contacts are provided by residues 8-11, lysine 22, glutamine 72, and 77-78; these read LAAG and GT. Aspartate 102 contributes to the Mg(2+) binding site. Residues glycine 139, glutamate 154, asparagine 169, and asparagine 227 each coordinate UDP-N-acetyl-alpha-D-glucosamine. Asparagine 227 is a Mg(2+) binding site. Residues 230–250 are linker; that stretch reads VALATAEKVMRHRIARQHMVN. The tract at residues 251–459 is N-acetyltransferase; it reads GVTVVNPDSA…NKKPHHPSQK (209 aa). 2 residues coordinate UDP-N-acetyl-alpha-D-glucosamine: arginine 332 and lysine 350. The active-site Proton acceptor is histidine 362. Residues tyrosine 365 and asparagine 376 each contribute to the UDP-N-acetyl-alpha-D-glucosamine site. Residues alanine 379, 385–386, serine 404, alanine 422, and arginine 439 contribute to the acetyl-CoA site; that span reads NY.

In the N-terminal section; belongs to the N-acetylglucosamine-1-phosphate uridyltransferase family. It in the C-terminal section; belongs to the transferase hexapeptide repeat family. In terms of assembly, homotrimer. Mg(2+) is required as a cofactor.

It is found in the cytoplasm. It carries out the reaction alpha-D-glucosamine 1-phosphate + acetyl-CoA = N-acetyl-alpha-D-glucosamine 1-phosphate + CoA + H(+). The catalysed reaction is N-acetyl-alpha-D-glucosamine 1-phosphate + UTP + H(+) = UDP-N-acetyl-alpha-D-glucosamine + diphosphate. Its pathway is nucleotide-sugar biosynthesis; UDP-N-acetyl-alpha-D-glucosamine biosynthesis; N-acetyl-alpha-D-glucosamine 1-phosphate from alpha-D-glucosamine 6-phosphate (route II): step 2/2. It functions in the pathway nucleotide-sugar biosynthesis; UDP-N-acetyl-alpha-D-glucosamine biosynthesis; UDP-N-acetyl-alpha-D-glucosamine from N-acetyl-alpha-D-glucosamine 1-phosphate: step 1/1. The protein operates within bacterial outer membrane biogenesis; LPS lipid A biosynthesis. In terms of biological role, catalyzes the last two sequential reactions in the de novo biosynthetic pathway for UDP-N-acetylglucosamine (UDP-GlcNAc). The C-terminal domain catalyzes the transfer of acetyl group from acetyl coenzyme A to glucosamine-1-phosphate (GlcN-1-P) to produce N-acetylglucosamine-1-phosphate (GlcNAc-1-P), which is converted into UDP-GlcNAc by the transfer of uridine 5-monophosphate (from uridine 5-triphosphate), a reaction catalyzed by the N-terminal domain. This is Bifunctional protein GlmU from Streptococcus agalactiae serotype III (strain NEM316).